We begin with the raw amino-acid sequence, 144 residues long: Bacilliredoxin SH1478 (144 aa).

It belongs to the bacilliredoxin family.

The polypeptide is Bacilliredoxin SH1478 (Staphylococcus haemolyticus (strain JCSC1435)).